Here is a 632-residue protein sequence, read N- to C-terminus: Phosphoglucomutase, chloroplastic (632 aa).

The N-terminal 72 residues, 1–72 (MAMESALTST…PSSPSTSVAQ (72 aa)), are a transit peptide targeting the chloroplast. Alpha-D-glucose 1,6-bisphosphate contacts are provided by arginine 97 and serine 190. The active-site Phosphoserine intermediate is serine 190. Serine 190, aspartate 355, aspartate 357, and aspartate 359 together coordinate Mg(2+). Serine 190 is modified (phosphoserine). Residues aspartate 359, arginine 360, threonine 423, glutamate 442, serine 444, and lysine 455 each coordinate alpha-D-glucose 1,6-bisphosphate.

This sequence belongs to the phosphohexose mutase family. In terms of assembly, monomer. Mg(2+) serves as cofactor.

It localises to the plastid. The protein resides in the chloroplast. The enzyme catalyses alpha-D-glucose 1-phosphate = alpha-D-glucose 6-phosphate. The catalysed reaction is O-phospho-L-seryl-[protein] + alpha-D-glucose 1-phosphate = alpha-D-glucose 1,6-bisphosphate + L-seryl-[protein]. It catalyses the reaction alpha-D-glucose 1,6-bisphosphate + L-seryl-[protein] = O-phospho-L-seryl-[protein] + alpha-D-glucose 6-phosphate. With respect to regulation, inhibited by the Calvin cycle intermediates fructose-1,6-bisphosphate and ribulose-1,5-bisphosphate. Its function is as follows. Catalyzes the reversible isomerization of alpha-D-glucose 1-phosphate to alpha-D-glucose 6-phosphate. The mechanism proceeds via the intermediate compound alpha-D-glucose 1,6-bisphosphate. This enzyme participates in both the breakdown and synthesis of glucose. Promotes gravitropic responses, negative in shoots but positive in roots, by facilitating starch granules (statoliths) formation. The chain is Phosphoglucomutase, chloroplastic (PGMP) from Solanum tuberosum (Potato).